The chain runs to 271 residues: Phosphate import ATP-binding protein PstB (271 aa).

The 242-residue stretch at 25 to 266 (VDVRQLSLWY…PKHPYTEAYI (242 aa)) folds into the ABC transporter domain. Residue 57–64 (GPSGCGKS) participates in ATP binding.

It belongs to the ABC transporter superfamily. Phosphate importer (TC 3.A.1.7) family. In terms of assembly, the complex is composed of two ATP-binding proteins (PstB), two transmembrane proteins (PstC and PstA) and a solute-binding protein (PstS).

The protein localises to the cell inner membrane. It catalyses the reaction phosphate(out) + ATP + H2O = ADP + 2 phosphate(in) + H(+). Part of the ABC transporter complex PstSACB involved in phosphate import. Responsible for energy coupling to the transport system. The chain is Phosphate import ATP-binding protein PstB from Thermus thermophilus (strain ATCC BAA-163 / DSM 7039 / HB27).